We begin with the raw amino-acid sequence, 23 residues long: Cysteine proteinase (23 aa).

A compositionally biased stretch (basic and acidic residues) spans 1–10 (ADSLDWREKG). Residues 1–23 (ADSLDWREKGVVNSIKDQAQXGS) form a disordered region.

It belongs to the peptidase C1 family.

The sequence is that of Cysteine proteinase from Tritrichomonas foetus (Trichomonas foetus).